The primary structure comprises 440 residues: Ribulose bisphosphate carboxylase large chain (440 aa).

K4 is modified (N6,N6,N6-trimethyllysine). Substrate contacts are provided by N113 and T163. The active-site Proton acceptor is the K165. Substrate is bound at residue K167. K191, D193, and E194 together coordinate Mg(2+). K191 bears the N6-carboxylysine mark. The Proton acceptor role is filled by H284. 3 residues coordinate substrate: R285, H317, and S369.

This sequence belongs to the RuBisCO large chain family. Type I subfamily. In terms of assembly, heterohexadecamer of 8 large chains and 8 small chains; disulfide-linked. The disulfide link is formed within the large subunit homodimers. The cofactor is Mg(2+). In terms of processing, the disulfide bond which can form in the large chain dimeric partners within the hexadecamer appears to be associated with oxidative stress and protein turnover.

Its subcellular location is the plastid. It localises to the chloroplast. It carries out the reaction 2 (2R)-3-phosphoglycerate + 2 H(+) = D-ribulose 1,5-bisphosphate + CO2 + H2O. The catalysed reaction is D-ribulose 1,5-bisphosphate + O2 = 2-phosphoglycolate + (2R)-3-phosphoglycerate + 2 H(+). Its function is as follows. RuBisCO catalyzes two reactions: the carboxylation of D-ribulose 1,5-bisphosphate, the primary event in carbon dioxide fixation, as well as the oxidative fragmentation of the pentose substrate in the photorespiration process. Both reactions occur simultaneously and in competition at the same active site. The sequence is that of Ribulose bisphosphate carboxylase large chain from Matteuccia struthiopteris (European ostrich fern).